Here is a 396-residue protein sequence, read N- to C-terminus: FAD-dependent monooxygenase phomE' (396 aa).

An FAD-binding site is contributed by E3. Active-site residues include R158 and Y196. 2 residues coordinate FAD: D277 and G290.

This sequence belongs to the paxM FAD-dependent monooxygenase family. As to quaternary structure, monomer. It depends on FAD as a cofactor.

In terms of biological role, FAD-dependent monooxygenase; part of the gene cluster that mediates the biosynthesis of the phomopsins, a group of hexapeptide mycotoxins which infects lupins and causes lupinosis disease in livestock. The role of phomE' within the phomopsins biosynthesis pathway has still to be determined. The pathway starts with the processing of the precursor phomA by several endopeptidases including kexin proteases as well as the cluster-specific S41 family peptidase phomP1 and the oligopeptidase phomG to produce 10 identical copies of the hexapeptide Tyr-Val-Ile-Pro-Ile-Asp. After being excised from the precursor peptide, the core peptides are cyclized and modified post-translationally by enzymes encoded within the gene cluster. The timing and order of proteolysis of the phomA precursor and PTMs are still unknown. Two tyrosinase-like enzymes, phomQ1 and phomQ2, catalyze the chlorination and hydroxylation of Tyr, respectively. PhomYb, is proposed to be involved in the construction of the macrocyclic structure. The other 4 ustYa family proteins may be involved in PTMs that generate the unique structure of phomopsin A. PhomYa is required for the hydroxylation of C-beta of Tyr. PhomYc, phomYd, and phomYe are responsible for the biosynthesis of 2,3-dehydroisoleucine (dIle), 2,3-dehydroaspartic acid (dAsp), and 3,4-dehydroproline (dPro), respectively. While dIle formation by phomYc is indispensable for the installation of dAsp by phomYd, the order of the other PTMs have not been elucidated yet. Most of the biosynthetic enzymes likely have broad substrate specificity, and thus, there might be a metabolic grid from a precursor to phomopsin A. The enzyme(s) responsible for the biosynthesis of 3,4-dehydrovaline (dVal) have also not been identified yet. Finally, phomM acts as an S-adenosylmethionine-dependent alpha-N-methyltransferase that catalyzes two successive N-methylation reactions, converting N-desmethyl-phomopsin A to phomopsin A and phomopsin A further to an N,N-dimethylated congener called phomopsin E. This is FAD-dependent monooxygenase phomE' from Diaporthe leptostromiformis (Lupinosis disease fungus).